Here is a 672-residue protein sequence, read N- to C-terminus: Beta-galactosidase bgaB (672 aa).

R109 is a binding site for substrate. C113 provides a ligand contact to Zn(2+). A substrate-binding site is contributed by N147. The Proton donor role is filled by E148. Zn(2+) contacts are provided by C156, C158, and C161. Residue E303 is the Nucleophile of the active site. Residues W311 and 351–354 (EKFH) each bind substrate.

The protein belongs to the glycosyl hydrolase 42 family.

It carries out the reaction Hydrolysis of terminal non-reducing beta-D-galactose residues in beta-D-galactosides.. By divalent metal ions. Fe(2+), Zn(2+), Cu(2+), Pb(2+) and Sn(2+) inhibit 52, 76.6, 85.3, 100 and 100% of the enzyme activity, respectively. Other metal cations and EDTA do not inhibit this enzyme. Thiol reagents 2-mercaptoethanol and dithiothreitol have no effect on the activity. Sulfhydryl group-blocking reagents p-chloromercuribenzoic acid and iodoacetic acid inhibit 86.2 and 74% of the enzyme activity, respectively. Hydrolyzes 6-bromo-2-naphthyl-beta-D-galactopyranoside and o-nitrophenyl-beta-D-galactopyranoside (ONPG). Possesses a high level of transgalactosylation activity. Hydrolyzes lactose in milk. The polypeptide is Beta-galactosidase bgaB (bgaB) (Geobacillus kaustophilus).